Here is a 701-residue protein sequence, read N- to C-terminus: Low-density lipoprotein receptor-related protein 12 (701 aa).

Residues 1 to 334 (GKSEEPNCAC…ENCPVIVPTR (334 aa)) lie on the Extracellular side of the membrane. 2 consecutive LDL-receptor class A domains span residues 7 to 43 (NCACDQFRCGNGKCIPEAWKCNNMDECGDSSDEEICA) and 56 to 97 (PCAY…IDCD). Intrachain disulfides connect Cys-8-Cys-20, Cys-15-Cys-33, Cys-27-Cys-42, Cys-57-Cys-74, Cys-64-Cys-87, Cys-81-Cys-96, and Cys-101-Cys-127. Residues 101 to 214 (CGQWLKYFYG…RGFNATYQVD (114 aa)) form the CUB domain. Asn-126 and Asn-208 each carry an N-linked (GlcNAc...) asparagine glycan. 3 LDL-receptor class A domains span residues 216–253 (FCLPWEIPCGGNWGCYTEQQRCDGYWHCPNGRDEINCT), 254–291 (MCQKEEFPCSRNGVCYPRSDRCNYQNHCPNGSDEKNCF), and 292–328 (FCQPGNFHCKNNRCVFESWVCDSQDDCGDGSDEENCP). 9 cysteine pairs are disulfide-bonded: Cys-217–Cys-230, Cys-224–Cys-243, Cys-237–Cys-252, Cys-255–Cys-268, Cys-262–Cys-281, Cys-275–Cys-290, Cys-293–Cys-305, Cys-300–Cys-318, and Cys-312–Cys-327. Asn-251 is a glycosylation site (N-linked (GlcNAc...) asparagine). Asn-283 is a glycosylation site (N-linked (GlcNAc...) asparagine). A helical transmembrane segment spans residues 335–355 (VITAAVIGSLICGLLLVIALG). The Cytoplasmic portion of the chain corresponds to 356–701 (CTCKLYSLRM…TSDDEALLLC (346 aa)). 4 disordered regions span residues 465–520 (ADGD…LPQK), 535–565 (ASSSTQSARGGHADNGRDVTSVEPPSVSPAR), 590–612 (SSVSQNQSPLRQLDNGVSGREDD), and 643–665 (DQGQGLRQPYSATNPGVRPSNRD). Composition is skewed to polar residues over residues 590–599 (SSVSQNQSPL) and 643–656 (DQGQGLRQPYSATN).

It belongs to the LDLR family. May interact with RACK1, ZFYVE9 and NMRK2.

It is found in the membrane. Its subcellular location is the coated pit. In terms of biological role, probable receptor, which may be involved in the internalization of lipophilic molecules and/or signal transduction. May act as a tumor suppressor. The chain is Low-density lipoprotein receptor-related protein 12 (LRP12) from Macaca fascicularis (Crab-eating macaque).